Reading from the N-terminus, the 310-residue chain is Protein N-terminal asparagine amidohydrolase (310 aa).

As to quaternary structure, monomer.

It is found in the cytoplasm. The catalysed reaction is N-terminal L-asparaginyl-[protein] + H2O + H(+) = N-terminal L-aspartyl-[protein] + NH4(+). Its function is as follows. N-terminal asparagine deamidase that mediates deamidation of N-terminal asparagine residues to aspartate. Required for the ubiquitin-dependent turnover of intracellular proteins that initiate with Met-Asn. These proteins are acetylated on the retained initiator methionine and can subsequently be modified by the removal of N-acetyl methionine by acylaminoacid hydrolase (AAH). Conversion of the resulting N-terminal asparagine to aspartate by NTAN1/PNAD renders the protein susceptible to arginylation, polyubiquitination and degradation as specified by the N-end rule. This enzyme does not act on substrates with internal or C-terminal asparagines and does not act on glutamine residues in any position. This Mus musculus (Mouse) protein is Protein N-terminal asparagine amidohydrolase.